Here is a 507-residue protein sequence, read N- to C-terminus: Protein DETOXIFICATION 41 (507 aa).

Over 1–62 (MSSTETYEPL…KLLWTLSGAS (62 aa)) the chain is Cytoplasmic. The helical transmembrane segment at 63-83 (IVVSVLNYMLSFVTVMFTGHL) threads the bilayer. The Vacuolar segment spans residues 84–92 (GSLQLAGAS). The chain crosses the membrane as a helical span at residues 93 to 113 (IATVGIQGLAYGIMLGMASAV). Topologically, residues 114 to 137 (QTVCGQAYGARQYSSMGIICQRAM) are cytoplasmic. Residues 138–158 (VLHLAAAVFLTFLYWYSGPIL) form a helical membrane-spanning segment. Residues 159-170 (KTMGQSVAIAHE) are Vacuolar-facing. A helical transmembrane segment spans residues 171–191 (GQIFARGMIPQIYAFALACPM). At 192–202 (QRFLQAQNIVN) the chain is on the cytoplasmic side. The chain crosses the membrane as a helical span at residues 203–223 (PLAYMSLGVFLLHTLLTWLVT). Asn224 is a topological domain (vacuolar). Residues 225-245 (VLDFGLLGAALILSFSWWLLV) traverse the membrane as a helical segment. At 246 to 283 (AVNGMYILMSPNCKETWTGFSTRAFRGIWPYFKLTVAS) the chain is on the cytoplasmic side. Residues 284-304 (AVMLCLEIWYNQGLVIISGLL) traverse the membrane as a helical segment. Topologically, residues 305–312 (SNPTISLD) are vacuolar. Residues 313 to 333 (AISICMYYLNWDMQFMLGLSA) traverse the membrane as a helical segment. The Cytoplasmic segment spans residues 334–355 (AISVRVSNELGAGNPRVAMLSV). The chain crosses the membrane as a helical span at residues 356–376 (VVVNITTVLISSVLCVIVLVF). Residues 377 to 389 (RVGLSKAFTSDAE) are Vacuolar-facing. A helical membrane pass occupies residues 390–410 (VIAAVSDLFPLLAVSIFLNGI). At 411–425 (QPILSGVAIGSGWQA) the chain is on the cytoplasmic side. Residues 426-446 (VVAYVNLVTYYVIGLPIGCVL) traverse the membrane as a helical segment. Topologically, residues 447 to 453 (GFKTSLG) are vacuolar. A helical transmembrane segment spans residues 454–474 (VAGIWWGMIAGVILQTLTLIV). The Cytoplasmic segment spans residues 475–507 (LTLKTNWTSEVENAAQRVKTSATENQEMANAGV).

The protein belongs to the multi antimicrobial extrusion (MATE) (TC 2.A.66.1) family. In terms of tissue distribution, expressed in reproductive tissues, from buds to siliques. Restricted to the endothelium layer of the ovule and the seed coat.

The protein localises to the vacuole membrane. Its pathway is secondary metabolite biosynthesis; flavonoid biosynthesis. Acts as a flavonoid/H(+)-antiporter that control the vacuolar sequestration of flavonoids in the seed coat endothelium. Could transport the anthocyanin cyanidin-3-O-glucoside and epicatechin 3'-O-glucoside in vitro. The chain is Protein DETOXIFICATION 41 from Arabidopsis thaliana (Mouse-ear cress).